Reading from the N-terminus, the 208-residue chain is Fibroblast growth factor 6 (208 aa).

An N-terminal signal peptide occupies residues 1–37 (MALGQKLFITMSRGAGRLQGTLWALVFLGILVGMVVP). Asparagine 45 carries N-linked (GlcNAc...) asparagine glycosylation. A disulfide bond links cysteine 90 and cysteine 157.

It belongs to the heparin-binding growth factors family. As to quaternary structure, interacts with FGFR1, FGFR2 and FGFR4. Affinity between fibroblast growth factors (FGFs) and their receptors is increased by heparan sulfate glycosaminoglycans that function as coreceptors. As to expression, leukemia cell lines with platelet/ megakaryocytic differentiation potential.

It is found in the secreted. It localises to the extracellular space. Its function is as follows. Plays an important role in the regulation of cell proliferation, cell differentiation, angiogenesis and myogenesis, and is required for normal muscle regeneration. This chain is Fibroblast growth factor 6 (FGF6), found in Homo sapiens (Human).